The primary structure comprises 432 residues: CLOCK-interacting pacemaker (432 aa).

2 disordered regions span residues 71 to 98 (ADSDKDSGFSDGSSECLSSAEQMESEDM) and 194 to 315 (SYTK…SSPL). Ser246 carries the phosphoserine modification. Over residues 272–283 (SPQTLQPVSSSH) the composition is skewed to polar residues. The stretch at 364-395 (EITLKTKELIRQNQATQAELDQLKEQTQMFIE) forms a coiled coil. The disordered stretch occupies residues 408-432 (LQASLTSGSSHSGSDLDTLSDHPDV). The segment covering 411 to 424 (SLTSGSSHSGSDLD) has biased composition (low complexity).

As to quaternary structure, interacts with CLOCK. Forms a ternary complex with the CLOCK-BMAL1 heterodimer. Interacts with CAD and HSPA5. Expressed in the heart, kidney and liver and shows a circadian oscillation in these tissues with a peak at circadian time 14 hours (at protein level). Expressed in the brain, including the suprachiasmatic nucleus (SCN) of the brain, and in multiple peripheral tissues such as heart, liver and kidney. Exhibits a circadian oscillation in the peripheral tissues with a peak at circadian time 14 hours.

The protein resides in the nucleus. The protein localises to the cytoplasm. Its subcellular location is the cytosol. In terms of biological role, transcriptional repressor which may act as a negative-feedback regulator of CLOCK-BMAL1 transcriptional activity in the circadian-clock mechanism. May stimulate BMAL1-dependent phosphorylation of CLOCK. However, the physiological relevance of these observations is unsure, since experiments in knockout mice showed that CIPC is not critially required for basic circadian clock. The sequence is that of CLOCK-interacting pacemaker (Cipc) from Mus musculus (Mouse).